A 425-amino-acid chain; its full sequence is Putative chloroquine resistance transporter (425 aa).

Residues 1-56 (MTGIKKGKNKKKNMKNDDRYKELDSLITNGSEIGNNSGRSCVKRFFKIIGNEMKNN) are Cytoplasmic-facing. Residues 57 to 77 (VYVYLLSILYLCVCVMNKVFA) traverse the membrane as a helical segment. At 78–88 (KRTLNKMGNYS) the chain is on the vacuolar side. N-linked (GlcNAc...) asparagine glycosylation occurs at Asn86. Residues 89–109 (FVTSETHNIICIIVFQLLYFI) form a helical membrane-spanning segment. At 110-126 (YRKTSSSSVYKNESQKN) the chain is on the cytoplasmic side. A helical transmembrane segment spans residues 127-147 (FGWQFFLISLLDASTVIISMI). At 148–157 (GLTRTTGNIQ) the chain is on the vacuolar side. A helical membrane pass occupies residues 158-178 (SFIMQLIIPVNMYFWFMFLGY). At 179 to 181 (RYH) the chain is on the cytoplasmic side. The helical transmembrane segment at 182–202 (LFNYLGAFIILITIAVVETFL) threads the bilayer. Residues 203–210 (SFETQGEN) are Vacuolar-facing. A helical transmembrane segment spans residues 211–231 (SIIFNLIMISAFNTLSFSNMT). Residues 232–249 (REVVFKKHKINILRLNAM) are Cytoplasmic-facing. The helical transmembrane segment at 250 to 270 (VVLFQFFTSLLVLPVYNIPFL) threads the bilayer. The Vacuolar segment spans residues 271-318 (KEIYMPFSEMSTNINNGLRCLFYGENTIVENCGVGMVKMCDNCEGAWK). 2 cysteine pairs are disulfide-bonded: Cys290/Cys313 and Cys302/Cys310. A helical membrane pass occupies residues 319–339 (TFITFSFFNICDNLLACYIID). Over 340–347 (KFSTMTYT) the chain is Cytoplasmic. Residues 348–368 (IVSCIQGPAITIAYYFKFLAG) form a helical membrane-spanning segment. Topologically, residues 369-378 (DAVRKPRILD) are vacuolar. Residues 379 to 399 (FLTLFGYLFGTIIYRIGNIIL) traverse the membrane as a helical segment. The Cytoplasmic portion of the chain corresponds to 400–425 (EKKQVIKSQNSNDSEAELTSIETSRA).

Belongs to the CRT-like transporter family.

The protein localises to the vacuole membrane. Nutrient transporter. Involved in maintaining the osmotic homeostasis of the digestive vacuole. This Plasmodium berghei protein is Putative chloroquine resistance transporter.